We begin with the raw amino-acid sequence, 421 residues long: 3-phosphoshikimate 1-carboxyvinyltransferase (421 aa).

3-phosphoshikimate contacts are provided by Lys19, Ser20, and Arg24. Lys19 contributes to the phosphoenolpyruvate binding site. The phosphoenolpyruvate site is built by Gly88 and Arg116. 3-phosphoshikimate-binding residues include Ser160, Gln162, Asp307, and Lys334. Gln162 contributes to the phosphoenolpyruvate binding site. Asp307 acts as the Proton acceptor in catalysis. Residues Arg338 and Arg380 each coordinate phosphoenolpyruvate.

This sequence belongs to the EPSP synthase family. As to quaternary structure, monomer.

The protein localises to the cytoplasm. It carries out the reaction 3-phosphoshikimate + phosphoenolpyruvate = 5-O-(1-carboxyvinyl)-3-phosphoshikimate + phosphate. Its pathway is metabolic intermediate biosynthesis; chorismate biosynthesis; chorismate from D-erythrose 4-phosphate and phosphoenolpyruvate: step 6/7. Catalyzes the transfer of the enolpyruvyl moiety of phosphoenolpyruvate (PEP) to the 5-hydroxyl of shikimate-3-phosphate (S3P) to produce enolpyruvyl shikimate-3-phosphate and inorganic phosphate. The polypeptide is 3-phosphoshikimate 1-carboxyvinyltransferase (Thermotoga neapolitana (strain ATCC 49049 / DSM 4359 / NBRC 107923 / NS-E)).